The primary structure comprises 426 residues: 10-deoxymethynolide desosaminyltransferase (426 aa).

The protein belongs to the glycosyltransferase 28 family. In terms of assembly, forms a complex with DesVIII.

It catalyses the reaction 10-deoxymethynolide + dTDP-alpha-D-desosamine = 10-deoxymethymycin + dTDP + H(+). The protein operates within antibiotic biosynthesis. In terms of biological role, involved in the biosynthesis of the macrolide antibiotics methymycin, neomethymycin, narbomycin, and pikromycin. Catalyzes the attachment of dTDP-D-desosamine onto 12- and 14-membered macrolactone rings 10-deoxymethynolide and narbonolide to produce 10-deoxymethymycin (YC-17) and narbomycin. DesVII is unique among glycosyltransferases in that it requires an additional protein component, DesVIII, for its activity. DesVII can recognize and process not only cyclic substrates of different ring size, but also a variety of linear substrates albeit with reduced, but measurable activities. Both L-sugars and D-sugars are recognized as substrates and variant substitutions at C-3 and C-4 are tolerated, but deoxygenation at C-6 is required. The chain is 10-deoxymethynolide desosaminyltransferase from Streptomyces venezuelae.